Here is a 365-residue protein sequence, read N- to C-terminus: Protein BIIDXI (365 aa).

Positions 1-21 (MKEMGVIVLLLLHSFFYVAFC) are cleaved as a signal peptide. N-linked (GlcNAc...) asparagine glycans are attached at residues asparagine 48, asparagine 121, and asparagine 208.

As to quaternary structure, interacts with PME3. As to expression, mainly expressed in vascular tissues of roots, leaves, stamens and petals.

Its subcellular location is the secreted. The protein localises to the cell wall. Together with At5g11420, acts as a positive regulator of PME3 activity during several developmental processes, including reproductive organ development, hypocotyls elongation, seed germination and endosperm (testa) rupture at the micropyle, probably by modulating the pectin methylation status in cell walls. Involved in the regulation of pectin methylation degree to modulate cell wall physiology during cell separation, hypocotyl growth and embryo development. Required during embryo development, especially to regulate homogalacturonans (HG) methyl esterification in endosperm cell walls, a process related to embryo bending. Also implicated in hypocotyl growth and gravitropic response via the regulation of auxin efflux. Also regulates cell wall pectin upon root-knot nematode Meloidogyne incognita infection. The sequence is that of Protein BIIDXI from Arabidopsis thaliana (Mouse-ear cress).